The following is a 684-amino-acid chain: Pentatricopeptide repeat-containing protein At4g14850 (684 aa).

PPR repeat units follow at residues 5-39 (SADA…LDSP), 41-71 (PPFL…TPAR), 72-106 (NVVS…GVVP), 107-141 (NDFT…GRIL), 142-172 (DVFV…IPER), 173-207 (NLET…DGHP), 208-242 (NSIT…GFDT), 243-277 (DVSV…NAVS), 278-308 (WCSL…IVET), 309-343 (SDFM…CVER), 344-374 (TIFV…MPEK), 375-409 (NLVT…GCGP), 412-442 (NYMT…MRST), and 448-478 (GAEH…MPIQ). The segment at 483–558 (VWGALQNACR…GAGYSWITVK (76 aa)) is type E motif; degenerate. Residues 559–589 (NQVHAFQAKDRSHILNKEIQTTLAKLRNEME) are type E(+) motif; degenerate. Residues 590–684 (AAGYKPDLKL…DGICSCKDYW (95 aa)) are type DYW motif.

It belongs to the PPR family. PCMP-H subfamily.

Acts as a regulatory factor of isoprenoid biosynthesis. Could bind RNA. This Arabidopsis thaliana (Mouse-ear cress) protein is Pentatricopeptide repeat-containing protein At4g14850 (LOI1).